The sequence spans 408 residues: ATP phosphoribosyltransferase regulatory subunit (408 aa).

Belongs to the class-II aminoacyl-tRNA synthetase family. HisZ subfamily. Heteromultimer composed of HisG and HisZ subunits.

The protein localises to the cytoplasm. It participates in amino-acid biosynthesis; L-histidine biosynthesis; L-histidine from 5-phospho-alpha-D-ribose 1-diphosphate: step 1/9. In terms of biological role, required for the first step of histidine biosynthesis. May allow the feedback regulation of ATP phosphoribosyltransferase activity by histidine. The sequence is that of ATP phosphoribosyltransferase regulatory subunit from Gloeothece citriformis (strain PCC 7424) (Cyanothece sp. (strain PCC 7424)).